The chain runs to 414 residues: Probable cell wall biosynthesis protein LcpB (414 aa).

The segment at 1-108 is disordered; the sequence is MDSPGQGEIA…PPVIAGDGGR (108 aa). Over 1 to 120 the chain is Cytoplasmic; that stretch reads MDSPGQGEIA…KAISFKPRGC (120 aa). Residues 9-23 show a composition bias toward basic and acidic residues; the sequence is IARDSQGRPILDRYG. The span at 33–42 shows a compositional bias: pro residues; the sequence is RQTPPTPRTP. A compositionally biased stretch (low complexity) spans 43-53; sequence PVNETRVYQPR. A compositionally biased stretch (pro residues) spans 54–80; that stretch reads QTPPRQTPPRQTPPRQMPPRQTPPRQV. Residues 121 to 141 traverse the membrane as a helical segment; the sequence is LGTIAGVLAVGLVLVFVVTLW. Residues 142–414 lie on the Periplasmic side of the membrane; it reads ADSKLNRVDA…GAEALFSSMR (273 aa).

The protein belongs to the LytR/CpsA/Psr (LCP) family.

The protein resides in the cell inner membrane. This is Probable cell wall biosynthesis protein LcpB from Corynebacterium glutamicum (strain ATCC 13032 / DSM 20300 / JCM 1318 / BCRC 11384 / CCUG 27702 / LMG 3730 / NBRC 12168 / NCIMB 10025 / NRRL B-2784 / 534).